The sequence spans 471 residues: Coagulation factor IX (471 aa).

A signal peptide spans 1 to 19; the sequence is MAKIPLILSFCLLEAFLGA. Positions 20–39 are excised as a propeptide; sequence ESTVFIENKEASTVLSRTRR. One can recognise a Gla domain in the interval 40-85; it reads GNSNRLEELIPGNLERECIEEKCSFEEAREVFENTEKTMEFWKIYI. 10 residues coordinate Ca(2+): Asn41, Glu46, Glu47, Glu54, Glu56, Glu59, Glu60, Glu65, Glu66, and Glu69. Glu46, Glu47, Glu54, Glu56, Glu59, Glu60, Glu65, Glu66, Glu69, Glu72, Glu75, and Glu79 each carry 4-carboxyglutamate. Glu54 is a Mg(2+) binding site. Residues Cys57 and Cys62 are joined by a disulfide bond. A Mg(2+)-binding site is contributed by Glu59. Residue Glu65 coordinates Mg(2+). A Mg(2+)-binding site is contributed by Glu69. Ca(2+) is bound by residues Glu75, Glu79, Asp86, Gly87, and Gln89. Residues Glu75 and Glu79 each coordinate Mg(2+). The 37-residue stretch at 86–122 folds into the EGF-like 1; calcium-binding domain; the sequence is DGDQCNSNPCKNGAVCKDGVSSYECMCPPGYGGRNCE. Intrachain disulfides connect Cys90-Cys101, Cys95-Cys110, Cys112-Cys121, Cys127-Cys138, Cys134-Cys148, Cys150-Cys163, Cys171-Cys345, Cys262-Cys278, Cys392-Cys406, and Cys417-Cys445. A glycan (O-linked (Glc...) serine) is linked at Ser92. Asp103 is a binding site for Ca(2+). Position 103 is a (3R)-3-hydroxyaspartate (Asp103). At Ser107 the chain carries Phosphoserine. The region spanning 123–164 is the EGF-like 2 domain; that stretch reads IDSTCATKNGGCEHFCRHDTPQKAVCSCASGYKLHEDGKSCK. Positions 186-235 are cleaved as a propeptide — activation peptide; sequence TENTIERWNITAHDEGDAHDEALDITEPPPPPTTSAAPAKIVPITKNDTR. Residues 236 to 469 form the Peptidase S1 domain; the sequence is VVGGYDSVKG…YVKWIRETTR (234 aa). His277 serves as the catalytic Charge relay system. Residues Glu291, Asn293, Glu296, and Glu301 each coordinate Ca(2+). Asp325 serves as the catalytic Charge relay system. Catalysis depends on Ser421, which acts as the Charge relay system.

Belongs to the peptidase S1 family. As to quaternary structure, heterodimer of a light chain and a heavy chain; disulfide-linked. Activated by factor XIa, which excises the activation peptide. The propeptide can also be removed by snake venom protease. Activated by coagulation factor VIIa-tissue factor (F7-F3) complex in calcium-dependent manner. Post-translationally, the iron and 2-oxoglutarate dependent 3-hydroxylation of aspartate and asparagine is (R) stereospecific within EGF domains.

Its subcellular location is the secreted. The catalysed reaction is Selective cleavage of Arg-|-Ile bond in factor X to form factor Xa.. Factor IX is a vitamin K-dependent plasma protein that participates in the intrinsic pathway of blood coagulation by converting factor X to its active form in the presence of Ca(2+) ions, phospholipids, and factor VIIIa. This chain is Coagulation factor IX (F9), found in Gallus gallus (Chicken).